The sequence spans 435 residues: WD repeat domain phosphoinositide-interacting protein 2 (435 aa).

The WD 1 repeat unit spans residues 182-222; the sequence is AHDSPLAALAFDASGTKLATASEKGTVIRVFSIPEGQKLFE. The short motif at 223–226 is the L/FRRG motif element; the sequence is FRRG. WD repeat units lie at residues 228–267 and 311–349; these read KRCV…EKPP and GHKN…GGEC. Residues 386-435 form a disordered region; that stretch reads VTKTYPPPSPTRHAYADDLGAVGGASEEDEMGNLRLDEDNENPPMILQTE.

Belongs to the WD repeat PROPPIN family.

Its subcellular location is the preautophagosomal structure membrane. Its function is as follows. Component of the autophagy machinery that controls the major intracellular degradation process by which cytoplasmic materials are packaged into autophagosomes and delivered to lysosomes for degradation. Involved in an early step of the formation of preautophagosomal structures. This is WD repeat domain phosphoinositide-interacting protein 2 (wipi2) from Xenopus laevis (African clawed frog).